A 151-amino-acid chain; its full sequence is UPF0756 membrane protein Moth_0120 (151 aa).

A run of 4 helical transmembrane segments spans residues 6–26, 52–72, 75–95, and 111–131; these read VILI…IAAA, AGLI…RVAP, MLQS…IIAT, and MMIG…GIPV.

The protein belongs to the UPF0756 family.

It is found in the cell membrane. The chain is UPF0756 membrane protein Moth_0120 from Moorella thermoacetica (strain ATCC 39073 / JCM 9320).